Consider the following 130-residue polypeptide: Galectin-2 (130 aa).

The region spanning 4 to 130 (KFEVKDLNMK…GLQISSFKLE (127 aa)) is the Galectin domain. Residue 65–71 (WGQEQRE) coordinates a beta-D-galactoside.

In terms of assembly, homodimer.

In terms of biological role, this protein binds beta-galactoside. Its physiological function is not yet known. The protein is Galectin-2 (Lgals2) of Mus musculus (Mouse).